The sequence spans 247 residues: UPF0309 protein Lm4b_02611 (247 aa).

Positions 31 to 214 constitute an SIS domain; that stretch reads VAESIENDGV…ETMVNDNFTP (184 aa).

The protein belongs to the UPF0309 family.

The chain is UPF0309 protein Lm4b_02611 from Listeria monocytogenes serotype 4b (strain CLIP80459).